The following is a 257-amino-acid chain: 3-oxo-5-alpha-steroid 4-dehydrogenase 1 (257 aa).

A run of 6 helical transmembrane segments spans residues 7–27 (FLLD…YVLL), 50–70 (AAWT…CAGA), 84–104 (ILLA…PFLI), 109–129 (PMPL…GYLQ), 149–169 (FLTG…SDHV), and 208–228 (ALAS…CVLF).

The protein belongs to the steroid 5-alpha reductase family.

Its subcellular location is the microsome membrane. It is found in the endoplasmic reticulum membrane. It carries out the reaction a 3-oxo-5alpha-steroid + NADP(+) = a 3-oxo-Delta(4)-steroid + NADPH + H(+). The catalysed reaction is 5alpha-pregnane-3,20-dione + NADP(+) = progesterone + NADPH + H(+). It catalyses the reaction 17beta-hydroxy-5alpha-androstan-3-one + NADP(+) = testosterone + NADPH + H(+). The enzyme catalyses androst-4-ene-3,17-dione + NADPH + H(+) = 5alpha-androstan-3,17-dione + NADP(+). Converts testosterone into 5-alpha-dihydrotestosterone and progesterone or corticosterone into their corresponding 5-alpha-3-oxosteroids. It plays a central role in sexual differentiation and androgen physiology. This is 3-oxo-5-alpha-steroid 4-dehydrogenase 1 (SRD5A1) from Bos taurus (Bovine).